A 216-amino-acid polypeptide reads, in one-letter code: Ras-related protein Rab-5C (216 aa).

GTP is bound by residues serine 30, alanine 31, glycine 33, lysine 34, serine 35, serine 36, histidine 47, glutamate 48, threonine 53, glycine 79, asparagine 134, lysine 135, aspartate 137, alanine 165, and lysine 166. Serine 35 serves as a coordination point for Mg(2+). 2 consecutive short sequence motifs (switch) follow at residues 45–57 (QFHEYQESTIGAA) and 78–94 (AGQERYHSLAPMYYRGA). A Mg(2+)-binding site is contributed by threonine 53. Residues 184-216 (KNEPQNAPGGPGRNRVVDLQESSQPSRSQCCSN) form a disordered region. Residues 203 to 216 (QESSQPSRSQCCSN) show a composition bias toward polar residues. 2 S-geranylgeranyl cysteine lipidation sites follow: cysteine 213 and cysteine 214.

It belongs to the small GTPase superfamily. Rab family. The cofactor is Mg(2+). Detected in brain, ovary, rectum, small intestine, large intestine, liver, spleen, follicle and kidney (at protein level).

It is found in the cell membrane. It localises to the early endosome membrane. It carries out the reaction GTP + H2O = GDP + phosphate + H(+). Regulated by guanine nucleotide exchange factors (GEFs) which promote the exchange of bound GDP for free GTP. Regulated by GTPase activating proteins (GAPs) which increase the GTP hydrolysis activity. Inhibited by GDP dissociation inhibitors (GDIs). The small GTPases Rab are key regulators of intracellular membrane trafficking, from the formation of transport vesicles to their fusion with membranes. Rabs cycle between an inactive GDP-bound form and an active GTP-bound form that is able to recruit to membranes different sets of downstream effectors directly responsible for vesicle formation, movement, tethering and fusion. The polypeptide is Ras-related protein Rab-5C (RAB5C) (Gallus gallus (Chicken)).